A 212-amino-acid polypeptide reads, in one-letter code: Regulatory protein RecX (212 aa).

Belongs to the RecX family.

The protein localises to the cytoplasm. Functionally, modulates RecA activity. The protein is Regulatory protein RecX of Clostridioides difficile (strain 630) (Peptoclostridium difficile).